The following is a 415-amino-acid chain: Homoserine O-acetyltransferase (415 aa).

The region spanning 47–369 (NAVLVCHGLT…HGHDAFLVEP (323 aa)) is the AB hydrolase-1 domain. The active-site Nucleophile is Ser155. Position 226 (Arg226) interacts with substrate. Active-site residues include Asp329 and His362. Asp363 serves as a coordination point for substrate. The disordered stretch occupies residues 383–415 (GVAGRAVTDTAPDGGEPDEDEDFAPVHSSLFSR).

This sequence belongs to the AB hydrolase superfamily. MetX family. In terms of assembly, homodimer.

The protein resides in the cytoplasm. It carries out the reaction L-homoserine + acetyl-CoA = O-acetyl-L-homoserine + CoA. Its pathway is amino-acid biosynthesis; L-methionine biosynthesis via de novo pathway; O-acetyl-L-homoserine from L-homoserine: step 1/1. Functionally, transfers an acetyl group from acetyl-CoA to L-homoserine, forming acetyl-L-homoserine. The sequence is that of Homoserine O-acetyltransferase from Haloferax volcanii (strain ATCC 29605 / DSM 3757 / JCM 8879 / NBRC 14742 / NCIMB 2012 / VKM B-1768 / DS2) (Halobacterium volcanii).